The following is a 450-amino-acid chain: Bifunctional protein GlmU (450 aa).

Residues 1-217 are pyrophosphorylase; the sequence is MKTLILAAGL…VDEITGVNNR (217 aa). UDP-N-acetyl-alpha-D-glucosamine-binding positions include 6–9, Lys20, Gln68, 73–74, 95–97, Gly134, Glu146, Asn161, and Asn215; these read LAAG, GT, and YGD. Asp97 provides a ligand contact to Mg(2+). Asn215 provides a ligand contact to Mg(2+). Positions 218-238 are linker; sequence IQLANLEKKIRRKINEKLMNQ. Residues 239 to 450 are N-acetyltransferase; sequence GVRIIDPNAV…GGQKNANNKK (212 aa). UDP-N-acetyl-alpha-D-glucosamine contacts are provided by Arg320 and Lys338. Catalysis depends on His350, which acts as the Proton acceptor. UDP-N-acetyl-alpha-D-glucosamine contacts are provided by Tyr353 and Asn364. Acetyl-CoA contacts are provided by residues Ala367, 373-374, Ser392, Ala410, and Arg427; that span reads NY.

It in the N-terminal section; belongs to the N-acetylglucosamine-1-phosphate uridyltransferase family. This sequence in the C-terminal section; belongs to the transferase hexapeptide repeat family. As to quaternary structure, homotrimer. The cofactor is Mg(2+).

The protein resides in the cytoplasm. The catalysed reaction is alpha-D-glucosamine 1-phosphate + acetyl-CoA = N-acetyl-alpha-D-glucosamine 1-phosphate + CoA + H(+). It catalyses the reaction N-acetyl-alpha-D-glucosamine 1-phosphate + UTP + H(+) = UDP-N-acetyl-alpha-D-glucosamine + diphosphate. The protein operates within nucleotide-sugar biosynthesis; UDP-N-acetyl-alpha-D-glucosamine biosynthesis; N-acetyl-alpha-D-glucosamine 1-phosphate from alpha-D-glucosamine 6-phosphate (route II): step 2/2. It functions in the pathway nucleotide-sugar biosynthesis; UDP-N-acetyl-alpha-D-glucosamine biosynthesis; UDP-N-acetyl-alpha-D-glucosamine from N-acetyl-alpha-D-glucosamine 1-phosphate: step 1/1. It participates in bacterial outer membrane biogenesis; LPS lipid A biosynthesis. In terms of biological role, catalyzes the last two sequential reactions in the de novo biosynthetic pathway for UDP-N-acetylglucosamine (UDP-GlcNAc). The C-terminal domain catalyzes the transfer of acetyl group from acetyl coenzyme A to glucosamine-1-phosphate (GlcN-1-P) to produce N-acetylglucosamine-1-phosphate (GlcNAc-1-P), which is converted into UDP-GlcNAc by the transfer of uridine 5-monophosphate (from uridine 5-triphosphate), a reaction catalyzed by the N-terminal domain. This is Bifunctional protein GlmU from Thermosipho melanesiensis (strain DSM 12029 / CIP 104789 / BI429).